A 257-amino-acid chain; its full sequence is Anamorsin homolog (257 aa).

The segment at 1–132 (MSVLALDVAR…ARGTAFALKS (132 aa)) is N-terminal SAM-like domain. The interval 133–171 (RAVRVNATAADAADAWGASAAADDDELIDESALLTELDV) is linker. The [2Fe-2S] cluster site is built by C181, C190, C193, and C195. The tract at residues 181–195 (CDVGAGKKACKNCTC) is fe-S binding site A. [4Fe-4S] cluster contacts are provided by C219, C222, C230, and C233. 2 short sequence motifs (cx2C motif) span residues 219–222 (CGNC) and 230–233 (CAGC). Residues 219 to 233 (CGNCALGDAFRCAGC) are fe-S binding site B.

The protein belongs to the anamorsin family. Monomer. [2Fe-2S] cluster serves as cofactor. Requires [4Fe-4S] cluster as cofactor.

It is found in the cytoplasm. The protein resides in the mitochondrion intermembrane space. Functionally, component of the cytosolic iron-sulfur (Fe-S) protein assembly (CIA) machinery. Required for the maturation of extramitochondrial Fe-S proteins. Part of an electron transfer chain functioning in an early step of cytosolic Fe-S biogenesis, facilitating the de novo assembly of a [4Fe-4S] cluster on the cytosolic Fe-S scaffold complex. Electrons are transferred from NADPH via a FAD- and FMN-containing diflavin oxidoreductase. Together with the diflavin oxidoreductase, also required for the assembly of the diferric tyrosyl radical cofactor of ribonucleotide reductase (RNR), probably by providing electrons for reduction during radical cofactor maturation in the catalytic small subunit. The chain is Anamorsin homolog from Ostreococcus lucimarinus (strain CCE9901).